Reading from the N-terminus, the 224-residue chain is MINLKEQVGIKAAEFVTDGMIVGLGTGSTAYYFVQEIGRRVAEEGLQITGVTTSHATAEHAASLGIPLKNIDEVEYVDLTVDGADEVDGDFNGIKGGGAALLMEKVVAVNSKDCIWIVDESKMVQTLGAFKLPVEVVQYGAENLFRLFEKKGYRPSFRMRNGKKHITDMQNFIIDLDLRRIEDTYALAEELDRTVGVVEHGLFIGLISKVIVGTPEGPNIIEKK.

Residues 26 to 29 (TGST), 82 to 85 (DGAD), and 95 to 98 (KGGG) contribute to the substrate site. Glutamate 104 functions as the Proton acceptor in the catalytic mechanism. A substrate-binding site is contributed by lysine 122.

This sequence belongs to the ribose 5-phosphate isomerase family. In terms of assembly, homodimer.

It catalyses the reaction aldehydo-D-ribose 5-phosphate = D-ribulose 5-phosphate. It participates in carbohydrate degradation; pentose phosphate pathway; D-ribose 5-phosphate from D-ribulose 5-phosphate (non-oxidative stage): step 1/1. Catalyzes the reversible conversion of ribose-5-phosphate to ribulose 5-phosphate. This is Ribose-5-phosphate isomerase A from Streptococcus suis (strain 98HAH33).